Consider the following 153-residue polypeptide: Transcription antitermination protein NusB (153 aa).

It belongs to the NusB family.

In terms of biological role, involved in transcription antitermination. Required for transcription of ribosomal RNA (rRNA) genes. Binds specifically to the boxA antiterminator sequence of the ribosomal RNA (rrn) operons. This chain is Transcription antitermination protein NusB, found in Symbiobacterium thermophilum (strain DSM 24528 / JCM 14929 / IAM 14863 / T).